The following is a 55-amino-acid chain: Large ribosomal subunit protein bL33B (55 aa).

The protein belongs to the bacterial ribosomal protein bL33 family.

This is Large ribosomal subunit protein bL33B from Mycobacteroides abscessus (strain ATCC 19977 / DSM 44196 / CCUG 20993 / CIP 104536 / JCM 13569 / NCTC 13031 / TMC 1543 / L948) (Mycobacterium abscessus).